Consider the following 74-residue polypeptide: MSKLTNVVIFIVFFLGMMAKETQGQHICHQILLNNNCDGATCTSLCDKQLQGTGQCYKTVDKRFICLCNYLCRT.

A signal peptide spans 1 to 24 (MSKLTNVVIFIVFFLGMMAKETQG). 4 cysteine pairs are disulfide-bonded: Cys28-Cys72, Cys37-Cys56, Cys42-Cys66, and Cys46-Cys68.

This sequence belongs to the DEFL family.

Its subcellular location is the secreted. In Arabidopsis thaliana (Mouse-ear cress), this protein is Putative defensin-like protein 128 (LCR8).